The primary structure comprises 336 residues: D-erythrose-4-phosphate dehydrogenase (336 aa).

Residue 11-12 (RI) participates in NAD(+) binding. Residues 153–155 (SCT), Arg-199, 212–213 (TR), and Arg-235 each bind substrate. Catalysis depends on Cys-154, which acts as the Nucleophile. Asn-317 provides a ligand contact to NAD(+).

This sequence belongs to the glyceraldehyde-3-phosphate dehydrogenase family. Epd subfamily. In terms of assembly, homotetramer.

It localises to the cytoplasm. The catalysed reaction is D-erythrose 4-phosphate + NAD(+) + H2O = 4-phospho-D-erythronate + NADH + 2 H(+). It participates in cofactor biosynthesis; pyridoxine 5'-phosphate biosynthesis; pyridoxine 5'-phosphate from D-erythrose 4-phosphate: step 1/5. In terms of biological role, catalyzes the NAD-dependent conversion of D-erythrose 4-phosphate to 4-phosphoerythronate. This Alteromonas mediterranea (strain DSM 17117 / CIP 110805 / LMG 28347 / Deep ecotype) protein is D-erythrose-4-phosphate dehydrogenase.